The chain runs to 158 residues: 6,7-dimethyl-8-ribityllumazine synthase (158 aa).

Residues Trp-28, 59–61, and 81–83 contribute to the 5-amino-6-(D-ribitylamino)uracil site; these read TVE and VVV. Residue 86-87 coordinates (2S)-2-hydroxy-3-oxobutyl phosphate; that stretch reads DT. The Proton donor role is filled by His-89. Phe-114 contacts 5-amino-6-(D-ribitylamino)uracil. (2S)-2-hydroxy-3-oxobutyl phosphate is bound at residue Arg-128.

It belongs to the DMRL synthase family.

It carries out the reaction (2S)-2-hydroxy-3-oxobutyl phosphate + 5-amino-6-(D-ribitylamino)uracil = 6,7-dimethyl-8-(1-D-ribityl)lumazine + phosphate + 2 H2O + H(+). It functions in the pathway cofactor biosynthesis; riboflavin biosynthesis; riboflavin from 2-hydroxy-3-oxobutyl phosphate and 5-amino-6-(D-ribitylamino)uracil: step 1/2. In terms of biological role, catalyzes the formation of 6,7-dimethyl-8-ribityllumazine by condensation of 5-amino-6-(D-ribitylamino)uracil with 3,4-dihydroxy-2-butanone 4-phosphate. This is the penultimate step in the biosynthesis of riboflavin. This Micrococcus luteus (strain ATCC 4698 / DSM 20030 / JCM 1464 / CCM 169 / CCUG 5858 / IAM 1056 / NBRC 3333 / NCIMB 9278 / NCTC 2665 / VKM Ac-2230) (Micrococcus lysodeikticus) protein is 6,7-dimethyl-8-ribityllumazine synthase.